Here is a 360-residue protein sequence, read N- to C-terminus: Phospho-N-acetylmuramoyl-pentapeptide-transferase (360 aa).

10 consecutive transmembrane segments (helical) span residues 27-47 (GAFLTALIFGFVFGKPLINVL), 69-89 (VGTPTMGGLLIVGALLFSTLM), 93-113 (WDNPFVWLVLFVTMSFGLIGF), 134-154 (LLLGFVIAIVAALWASWNHPA), 168-188 (VLLNLGYLYVPFCICVIVGAA), 199-219 (GLAIMPVMIAAGTLGIIAYAV), 239-259 (ILIFTSALFGGGLGFLWYNAP), 262-282 (AVFMGDTGSLALGGALGAIAI), 288-308 (LVLAIVGGLFVVEALSVIIQV), and 337-357 (TIVIRFWIISLILAMIGLATL).

This sequence belongs to the glycosyltransferase 4 family. MraY subfamily. Requires Mg(2+) as cofactor.

The protein localises to the cell inner membrane. It catalyses the reaction UDP-N-acetyl-alpha-D-muramoyl-L-alanyl-gamma-D-glutamyl-meso-2,6-diaminopimeloyl-D-alanyl-D-alanine + di-trans,octa-cis-undecaprenyl phosphate = di-trans,octa-cis-undecaprenyl diphospho-N-acetyl-alpha-D-muramoyl-L-alanyl-D-glutamyl-meso-2,6-diaminopimeloyl-D-alanyl-D-alanine + UMP. It functions in the pathway cell wall biogenesis; peptidoglycan biosynthesis. In terms of biological role, catalyzes the initial step of the lipid cycle reactions in the biosynthesis of the cell wall peptidoglycan: transfers peptidoglycan precursor phospho-MurNAc-pentapeptide from UDP-MurNAc-pentapeptide onto the lipid carrier undecaprenyl phosphate, yielding undecaprenyl-pyrophosphoryl-MurNAc-pentapeptide, known as lipid I. This is Phospho-N-acetylmuramoyl-pentapeptide-transferase from Ruegeria sp. (strain TM1040) (Silicibacter sp.).